The following is a 380-amino-acid chain: Cytochrome b (380 aa).

4 consecutive transmembrane segments (helical) span residues 34–54, 78–99, 114–134, and 179–199; these read FGSLLGICLMTQILTGLLLAM, WLIRNLHANGASFFFICIYFHI, WNTGVILLLTLMATAFVGYVL, and FFALHFLLPFLIAGLTLIHLT. Heme b is bound by residues His-84 and His-98. Heme b is bound by residues His-183 and His-197. Position 202 (His-202) interacts with a ubiquinone. Helical transmembrane passes span 227 to 247, 289 to 309, 321 to 341, and 348 to 368; these read LKDILGFTLMFLPLTTLALFS, LGGVLALAASVLILFLIPFLH, ISQLLFWILVANLLILTWVGS, and FIIIGQLASITYFTILLVLFP.

This sequence belongs to the cytochrome b family. As to quaternary structure, the cytochrome bc1 complex contains 11 subunits: 3 respiratory subunits (MT-CYB, CYC1 and UQCRFS1), 2 core proteins (UQCRC1 and UQCRC2) and 6 low-molecular weight proteins (UQCRH/QCR6, UQCRB/QCR7, UQCRQ/QCR8, UQCR10/QCR9, UQCR11/QCR10 and a cleavage product of UQCRFS1). This cytochrome bc1 complex then forms a dimer. The cofactor is heme b.

It is found in the mitochondrion inner membrane. Component of the ubiquinol-cytochrome c reductase complex (complex III or cytochrome b-c1 complex) that is part of the mitochondrial respiratory chain. The b-c1 complex mediates electron transfer from ubiquinol to cytochrome c. Contributes to the generation of a proton gradient across the mitochondrial membrane that is then used for ATP synthesis. The polypeptide is Cytochrome b (MT-CYB) (Pachyptila turtur (Fairy prion)).